The sequence spans 322 residues: MNSKFFGLVQKGTRSFFPSLNFCYTRNIMSVSASSLVPKDFRAFRIGLVQLANTKDKSENLQLARLKVLEAAKNGSNVIVLPEIFNSPYGTGYFNQYAEPIEESSPSYQALSSMAKDTKTYLFGGSIPERKDGKLYNTAMVFDPSGKLIAVHRKIHLFDIDIPGGVSFRESDSLSPGDAMTMVDTEYGKFGLGICYDIRFPELAMIAARNGCSVMIYPGAFNLSTGPLHWELLARARAVDNEMFVACCAPARDMNADYHSWGHSTVVDPFGKVIATTDEKPSIVYADIDPSVMSTARNSVPIYTQRRFDVYSEVLPALKKEE.

Residues 44 to 290 form the CN hydrolase domain; the sequence is FRIGLVQLAN…PSIVYADIDP (247 aa). Residue E83 is the Proton acceptor of the active site. K154 (proton donor) is an active-site residue. The Nucleophile role is filled by C195.

The protein belongs to the carbon-nitrogen hydrolase superfamily. NIT1/NIT2 family.

The sequence is that of Hydrolase C26A3.11 from Schizosaccharomyces pombe (strain 972 / ATCC 24843) (Fission yeast).